A 561-amino-acid chain; its full sequence is MDFFKKEILDWSIYLFLHYITRLCSNSSNSSTSHIIQEYNLVRKYEKVDKTIVDFLSRWPNLFHILEYGENILHIYFIDAANTNIMIFFLDRVLNINKNRGSFIHNLGLSSINIKEYVYQLVNNDHLDNSIRLMLENGRRTRHFLSYILDTVNIYISILINHRFYIDAEDSYGCTLLHRCIYNYKKSESESYNELIKILLNNGSDVDKKDTYGNTPFILLCKHDIDNAELFEICLENANIDSVDFNGYTPLHYVSCRNKYDFVKLLISKGANVNARNRFGTTPFYCGIIHGISLIKLYLESDTELEIDNEHIVRHLIIFDAVESLDYLLSRGVIDINYRTIYNETSIYDAVSYNAYNTLVYLLNRNGDFETITTSGCTCISEAVANNNKIIMDILLSKRPSLKIMIPSMIAITKHKQHNADLLKMCIKYTACMTDYDTLIDVQSLHQYKWYILKCFDEIDIMKRCYIKNKTVFQLVFCIKDINTLMRYGRHPSFVKCNILDVYGSCVRNIIASIRYRQRLISLLSKKLDAGDKWSCFPNEIKYKILENFNDNELTTYLKIL.

ANK repeat units follow at residues 68-98 (YGEN…NINK), 172-208 (YGCT…DVDK), 212-242 (YGNT…NIDS), 246-275 (NGYT…NVNA), 279-307 (FGTT…ELEI), 342-371 (YNET…DFET), and 375-404 (SGCT…SLKI).

The protein belongs to the orthopoxvirus OPG189 protein family.

Functionally, contributes to viral release without involving rearrangement of host actin. In Cynomys gunnisoni (Gunnison's prairie dog), this protein is Ankyrin repeat protein OPG189 (OPG189).